Consider the following 213-residue polypeptide: High frequency lysogenization protein HflD homolog (213 aa).

Positions 79–122 form a coiled coil; that stretch reads QGLNAELTRYTLSLMVLERKLSSAKGALNTLGDRINGLQRQLDH.

It belongs to the HflD family.

The protein localises to the cytoplasm. Its subcellular location is the cell inner membrane. This chain is High frequency lysogenization protein HflD homolog, found in Salmonella typhi.